A 91-amino-acid polypeptide reads, in one-letter code: MTEQENKTSLIEFPCTFPLKVMGAVHPEFEQAVLETVRLHAPDTQAHHITTRPSSKGNYTGATVQVKVENQEQLDNIYRALTSHELVKVVL.

Belongs to the UPF0250 family.

The sequence is that of UPF0250 protein NGO_0791 from Neisseria gonorrhoeae (strain ATCC 700825 / FA 1090).